The chain runs to 151 residues: Protein SprT-like (151 aa).

The SprT-like domain occupies 6–148 (LQALVERISL…FCRGKLKKIK (143 aa)). Position 67 (His67) interacts with Zn(2+). Glu68 is a catalytic residue. His71 lines the Zn(2+) pocket.

Belongs to the SprT family. Requires Zn(2+) as cofactor.

It localises to the cytoplasm. In Anoxybacillus flavithermus (strain DSM 21510 / WK1), this protein is Protein SprT-like.